Here is a 387-residue protein sequence, read N- to C-terminus: Succinate--CoA ligase [ADP-forming] subunit beta (387 aa).

ATP is bound by residues lysine 46, 53 to 55, glutamate 99, alanine 102, and glutamate 107; that span reads GRG. Mg(2+) is bound by residues asparagine 199 and aspartate 213. Residues asparagine 264 and 321 to 323 each bind substrate; that span reads GIV.

This sequence belongs to the succinate/malate CoA ligase beta subunit family. As to quaternary structure, heterotetramer of two alpha and two beta subunits. Mg(2+) serves as cofactor.

The catalysed reaction is succinate + ATP + CoA = succinyl-CoA + ADP + phosphate. The enzyme catalyses GTP + succinate + CoA = succinyl-CoA + GDP + phosphate. The protein operates within carbohydrate metabolism; tricarboxylic acid cycle; succinate from succinyl-CoA (ligase route): step 1/1. Succinyl-CoA synthetase functions in the citric acid cycle (TCA), coupling the hydrolysis of succinyl-CoA to the synthesis of either ATP or GTP and thus represents the only step of substrate-level phosphorylation in the TCA. The beta subunit provides nucleotide specificity of the enzyme and binds the substrate succinate, while the binding sites for coenzyme A and phosphate are found in the alpha subunit. This Campylobacter jejuni subsp. jejuni serotype O:23/36 (strain 81-176) protein is Succinate--CoA ligase [ADP-forming] subunit beta.